The sequence spans 269 residues: ATP synthase subunit delta (269 aa).

Belongs to the ATPase delta chain family. F-type ATPases have 2 components, F(1) - the catalytic core - and F(0) - the membrane proton channel. F(1) has five subunits: alpha(3), beta(3), gamma(1), delta(1), epsilon(1). F(0) has three main subunits: a(1), b(2) and c(10-14). The alpha and beta chains form an alternating ring which encloses part of the gamma chain. F(1) is attached to F(0) by a central stalk formed by the gamma and epsilon chains, while a peripheral stalk is formed by the delta and b chains.

It is found in the cell membrane. In terms of biological role, f(1)F(0) ATP synthase produces ATP from ADP in the presence of a proton or sodium gradient. F-type ATPases consist of two structural domains, F(1) containing the extramembraneous catalytic core and F(0) containing the membrane proton channel, linked together by a central stalk and a peripheral stalk. During catalysis, ATP synthesis in the catalytic domain of F(1) is coupled via a rotary mechanism of the central stalk subunits to proton translocation. Functionally, this protein is part of the stalk that links CF(0) to CF(1). It either transmits conformational changes from CF(0) to CF(1) or is implicated in proton conduction. The polypeptide is ATP synthase subunit delta (Nocardia farcinica (strain IFM 10152)).